The primary structure comprises 513 residues: 2-isopropylmalate synthase (513 aa).

The 264-residue stretch at 5 to 268 (LIIFDTTLRD…DLRVDTSQIV (264 aa)) folds into the Pyruvate carboxyltransferase domain. Aspartate 14, histidine 202, histidine 204, and asparagine 239 together coordinate Mn(2+). Positions 394-513 (RLLALSQHSE…SKAERVAAQG (120 aa)) are regulatory domain.

It belongs to the alpha-IPM synthase/homocitrate synthase family. LeuA type 1 subfamily. In terms of assembly, homodimer. Mn(2+) serves as cofactor.

It is found in the cytoplasm. The catalysed reaction is 3-methyl-2-oxobutanoate + acetyl-CoA + H2O = (2S)-2-isopropylmalate + CoA + H(+). It functions in the pathway amino-acid biosynthesis; L-leucine biosynthesis; L-leucine from 3-methyl-2-oxobutanoate: step 1/4. Catalyzes the condensation of the acetyl group of acetyl-CoA with 3-methyl-2-oxobutanoate (2-ketoisovalerate) to form 3-carboxy-3-hydroxy-4-methylpentanoate (2-isopropylmalate). The polypeptide is 2-isopropylmalate synthase (Leptothrix cholodnii (strain ATCC 51168 / LMG 8142 / SP-6) (Leptothrix discophora (strain SP-6))).